Consider the following 1939-residue polypeptide: Myosin-4 (1939 aa).

A Myosin N-terminal SH3-like domain is found at 33-82 (DAKSSVFVVDAKESYVKATVQSREGGKVTAKTEGGATVTVKDDQVFSMNP). Ser-36 is subject to Phosphoserine. Residues Thr-64 and Thr-69 each carry the phosphothreonine modification. Residue Ser-79 is modified to Phosphoserine. The 697-residue stretch at 86-782 (DKIEDMAMMT…LLGTLEEMRD (697 aa)) folds into the Myosin motor domain. Lys-130 carries the N6,N6,N6-trimethyllysine modification. An ATP-binding site is contributed by 179 to 186 (GESGAGKT). Residue Tyr-389 is modified to Phosphotyrosine. Thr-391 is modified (phosphothreonine). Phosphoserine is present on Ser-392. Thr-419 carries the post-translational modification Phosphothreonine. At Tyr-424 the chain carries Phosphotyrosine. Position 625 is a phosphoserine (Ser-625). Positions 659 to 681 (LNKLMTNLKSTHPHFVRCLIPNE) are actin-binding. At His-757 the chain carries Pros-methylhistidine. The segment at 761–775 (KFGHTKVFFKAGLLG) is actin-binding. Thr-776 carries the phosphothreonine modification. The 30-residue stretch at 785–814 (LAQLITRTQAVCRGYLMRVEFKKMMERRES) folds into the IQ domain. Residues 843 to 1939 (LLKSAETEKE…EVHTKVISEE (1097 aa)) are a coiled coil. Residues Ser-1092 and Ser-1096 each carry the phosphoserine modification. 2 disordered regions span residues 1128–1147 (AERA…SREL) and 1153–1172 (RLEE…KKRE). Phosphoserine is present on residues Ser-1162 and Ser-1237. A Phosphothreonine modification is found at Thr-1241. At Ser-1243 the chain carries Phosphoserine. A Phosphothreonine modification is found at Thr-1255. Ser-1261 is modified (phosphoserine). Thr-1265 bears the Phosphothreonine mark. Residues 1276–1299 (ELSTQKARLHTESGEFSRQLDEKD) are disordered. A Phosphoserine modification is found at Ser-1278. Positions 1284–1299 (LHTESGEFSRQLDEKD) are enriched in basic and acidic residues. At Thr-1286 the chain carries Phosphothreonine. Residues Ser-1288, Ser-1292, Ser-1303, Ser-1306, and Ser-1413 each carry the phosphoserine modification. Tyr-1464 is modified (phosphotyrosine). Residue Thr-1467 is modified to Phosphothreonine. Position 1474 is a phosphoserine (Ser-1474). Tyr-1492 bears the Phosphotyrosine mark. Phosphoserine is present on Ser-1495. At Thr-1501 the chain carries Phosphothreonine. Ser-1514 is subject to Phosphoserine. Thr-1517 carries the phosphothreonine modification. 8 positions are modified to phosphoserine: Ser-1542, Ser-1547, Ser-1554, Ser-1574, Ser-1600, Ser-1603, Ser-1714, and Ser-1726. 2 positions are modified to phosphothreonine: Thr-1730 and Thr-1736. Ser-1739 bears the Phosphoserine mark.

Belongs to the TRAFAC class myosin-kinesin ATPase superfamily. Myosin family. In terms of assembly, muscle myosin is a hexameric protein that consists of 2 heavy chain subunits (MHC), 2 alkali light chain subunits (MLC) and 2 regulatory light chain subunits (MLC-2). Expressed in type 2b myofibers in the tibialis anterior muscle (at protein level).

The protein localises to the cytoplasm. The protein resides in the myofibril. Its function is as follows. Muscle contraction. The sequence is that of Myosin-4 (Myh4) from Mus musculus (Mouse).